Consider the following 504-residue polypeptide: Maturase K (504 aa).

Belongs to the intron maturase 2 family. MatK subfamily.

It is found in the plastid. The protein resides in the chloroplast. Usually encoded in the trnK tRNA gene intron. Probably assists in splicing its own and other chloroplast group II introns. This Quercus gemelliflora (Pasang hiris) protein is Maturase K.